The chain runs to 396 residues: Anaerobic glycerol-3-phosphate dehydrogenase subunit C (396 aa).

2 4Fe-4S ferredoxin-type domains span residues 2–29 and 45–76; these read NDTSFENCIKCTVCTTACPVSRVNPGYP and DGALYDEALKYCINCKRCEVACPSDVKIGDII. 8 residues coordinate [4Fe-4S] cluster: C9, C12, C15, C19, C56, C59, C62, and C66.

As to quaternary structure, composed of a catalytic GlpA/B dimer and of GlpC.

Its subcellular location is the cell inner membrane. The protein operates within polyol metabolism; glycerol degradation via glycerol kinase pathway; glycerone phosphate from sn-glycerol 3-phosphate (anaerobic route): step 1/1. In terms of biological role, electron transfer protein; may also function as the membrane anchor for the GlpAB dimer. The protein is Anaerobic glycerol-3-phosphate dehydrogenase subunit C (glpC) of Escherichia coli O157:H7.